The chain runs to 606 residues: Fructan 6-exohydrolase (606 aa).

An N-terminal signal peptide occupies residues 1 to 21 (MAPNNGSWLVLSISMMLLSHG). N-linked (GlcNAc...) asparagine glycosylation is present at Asn5. The active site involves Asp70. 5 N-linked (GlcNAc...) asparagine glycosylation sites follow: Asn110, Asn164, Asn193, Asn237, and Asn346. A disulfide bond links Cys445 and Cys491. Asn564, Asn585, Asn590, and Asn593 each carry an N-linked (GlcNAc...) asparagine glycan.

This sequence belongs to the glycosyl hydrolase 32 family.

The catalysed reaction is Hydrolysis of terminal, non-reducing (2-&gt;6)-linked beta-D-fructofuranose residues in fructans.. Not inhibited by sucrose. Hydrolyzes levan-type beta-(2-&gt;6)-linked fructans to fructose, but not inulin-type beta-(2-&gt;1)-linked fructans. The sequence is that of Fructan 6-exohydrolase from Beta vulgaris (Sugar beet).